The sequence spans 712 residues: Polyribonucleotide nucleotidyltransferase (712 aa).

2 residues coordinate Mg(2+): Asp487 and Asp493. In terms of domain architecture, KH spans 554–613 (PKIITMTINPDKIRDVIGPSGKQINKIIEETGVKIDIEQDGTVFISSINQEMNDKAKKII). In terms of domain architecture, S1 motif spans 623-691 (GEIYEGKVKR…KQGRVNLSRK (69 aa)).

It belongs to the polyribonucleotide nucleotidyltransferase family. It depends on Mg(2+) as a cofactor.

The protein localises to the cytoplasm. The catalysed reaction is RNA(n+1) + phosphate = RNA(n) + a ribonucleoside 5'-diphosphate. In terms of biological role, involved in mRNA degradation. Catalyzes the phosphorolysis of single-stranded polyribonucleotides processively in the 3'- to 5'-direction. The protein is Polyribonucleotide nucleotidyltransferase of Bacillus cereus (strain AH187).